A 331-amino-acid chain; its full sequence is MPAATTSIFYLPDINIAPWLESPTSPSGQQVVDQVRKACTSTGFFQLTGHGLSQDVVEDIFAASAKFFALPKDVKQGLNFTKNLGFRGYELIGAQVYESDVLPDLKEGFLAGIDLPFEDMRVQNKRFFAGQNVWPPPDVLPYAEFREPVEKYYKSIMQLCFTVMDLVAATLPYGPDVFDEWKSHEPACPLRLLHYPPTPAHVAGKTRQLGSSAHTDFGALTLLLQDSHEGLEVLNHDTGDWVLVPPKPGAFVVNIADMMTMVTVGEYKSSKHRVINRNETEDRYSVVFFMDGNVDYKLRRLDKIGQPIGDDEDLLTVEDYMLGKRNSTYVK.

The region spanning 186-292 (PACPLRLLHY…RYSVVFFMDG (107 aa)) is the Fe2OG dioxygenase domain. Fe cation contacts are provided by His214, Asp216, and His272. Arg283 contributes to the 2-oxoglutarate binding site.

This sequence belongs to the iron/ascorbate-dependent oxidoreductase family. The cofactor is Fe(2+).

Its pathway is mycotoxin biosynthesis. In terms of biological role, 2-oxoglutarate-dependent dioxygenase; part of the gene cluster that mediates the biosynthesis of the selective antifungal agent ascochitine, an o-quinone methide that plays a possible protective role against other microbial competitors in nature and is considered to be important for pathogenicity of legume-associated Didymella species. The pathway probably begins with the synthesis of a keto-aldehyde intermediate by the ascochitine non-reducing polyketide synthase pksAC from successive condensations of 4 malonyl-CoA units, presumably with a simple acetyl-CoA starter unit. Release of the keto-aldehyde intermediate is consistent with the presence of the C-terminal reductive release domain. The HR-PKS (orf7) probably makes a diketide starter unit which is passed to the non-reducing polyketide synthase pksAC for further extension, producing ascochital and ascochitine. The aldehyde dehydrogenase (orf1), the 2-oxoglutarate-dependent dioxygenase (orf3) and the dehydrogenase (orf9) are probably involved in subsequent oxidations of methyl groups to the carboxylic acid of the heterocyclic ring. The ascochitine gene cluster also includes a gene encoding a short peptide with a cupin domain (orf2) that is often found in secondary metabolite gene clusters and which function has still to be determined. This chain is 2-oxoglutarate-dependent dioxygenase, found in Didymella fabae (Leaf and pod spot disease fungus).